Reading from the N-terminus, the 312-residue chain is Putative HTH-type transcriptional regulatory protein TV0294 (312 aa).

An HTH cro/C1-type domain is found at 133-186; that stretch reads LRERRNELNLSIGNISSYLGVSRRSVSLYENGSAATIDIFIRLRNILKADIVDH. Positions 144 to 163 form a DNA-binding region, H-T-H motif; that stretch reads IGNISSYLGVSRRSVSLYEN.

This Thermoplasma volcanium (strain ATCC 51530 / DSM 4299 / JCM 9571 / NBRC 15438 / GSS1) protein is Putative HTH-type transcriptional regulatory protein TV0294.